The following is a 504-amino-acid chain: Anaerobic nitric oxide reductase transcription regulator NorR (504 aa).

Asp57 carries the post-translational modification 4-aspartylphosphate. The Sigma-54 factor interaction domain maps to 187–416 (MIGLSPGMTQ…LEHAIHRAVV (230 aa)). Residues 215-222 (GETGTGKE) and 278-287 (ADNGTLFLDE) each bind ATP. Positions 479 to 498 (WAACARMLETDVANLHRLAK) form a DNA-binding region, H-T-H motif.

Its pathway is nitrogen metabolism; nitric oxide reduction. Functionally, required for the expression of anaerobic nitric oxide (NO) reductase, acts as a transcriptional activator for at least the norVW operon. Activation also requires sigma-54. This Escherichia coli O157:H7 protein is Anaerobic nitric oxide reductase transcription regulator NorR.